The primary structure comprises 183 residues: Adenine phosphoribosyltransferase (183 aa).

Belongs to the purine/pyrimidine phosphoribosyltransferase family. As to quaternary structure, homodimer.

The protein resides in the cytoplasm. The catalysed reaction is AMP + diphosphate = 5-phospho-alpha-D-ribose 1-diphosphate + adenine. The protein operates within purine metabolism; AMP biosynthesis via salvage pathway; AMP from adenine: step 1/1. Catalyzes a salvage reaction resulting in the formation of AMP, that is energically less costly than de novo synthesis. In Salmonella heidelberg (strain SL476), this protein is Adenine phosphoribosyltransferase.